We begin with the raw amino-acid sequence, 201 residues long: MARYTGPITRKSRRLRVDLVGGDQAFERRPYPPGQHGRARIKESEYLLQLQEKQKARFTYGVMEKQFRLYYKEANNRPGKTGENLLRILESRLDNVVYRAGLARTRRQARQLVTHGHLLVNNKKVDIPSYRVSQYDIIDVKEKSLSTLPFQVARETVGDRPVPGWLQVVGSRLRILVHQLPERAQIDIALQEQLIVEYYSK.

The 67-residue stretch at 91–157 (SRLDNVVYRA…LPFQVARETV (67 aa)) folds into the S4 RNA-binding domain.

Belongs to the universal ribosomal protein uS4 family. Part of the 30S ribosomal subunit. Contacts protein S5. The interaction surface between S4 and S5 is involved in control of translational fidelity.

One of the primary rRNA binding proteins, it binds directly to 16S rRNA where it nucleates assembly of the body of the 30S subunit. In terms of biological role, with S5 and S12 plays an important role in translational accuracy. This chain is Small ribosomal subunit protein uS4, found in Rhodococcus erythropolis (strain PR4 / NBRC 100887).